The primary structure comprises 67 residues: Guanine nucleotide-binding protein G(I)/G(S)/G(O) subunit gamma-13 (67 aa).

Cysteine 64 carries the post-translational modification Cysteine methyl ester. Cysteine 64 is lipidated: S-farnesyl cysteine. Residues 65-67 (TIL) constitute a propeptide, removed in mature form.

The protein belongs to the G protein gamma family. As to quaternary structure, g proteins are composed of 3 units, alpha, beta and gamma.

It is found in the cell membrane. Functionally, guanine nucleotide-binding proteins (G proteins) are involved as a modulator or transducer in various transmembrane signaling systems. The beta and gamma chains are required for the GTPase activity, for replacement of GDP by GTP, and for G protein-effector interaction. The sequence is that of Guanine nucleotide-binding protein G(I)/G(S)/G(O) subunit gamma-13 (Gng13) from Mus musculus (Mouse).